Consider the following 363-residue polypeptide: Fructose-bisphosphate aldolase C (363 aa).

The residue at position 5 (Tyr5) is a Phosphotyrosine. 3 positions are modified to phosphoserine: Ser36, Ser39, and Ser45. Arg56 is a substrate binding site. At Lys111 the chain carries N6-acetyllysine. Position 147 (Lys147) interacts with substrate. Residue Glu188 is the Proton acceptor of the active site. The active-site Schiff-base intermediate with dihydroxyacetone-P is the Lys230.

This sequence belongs to the class I fructose-bisphosphate aldolase family. As to quaternary structure, homotetramer. Interacts with ATP6V1E1. As to expression, high expression in the adult brain.

It catalyses the reaction beta-D-fructose 1,6-bisphosphate = D-glyceraldehyde 3-phosphate + dihydroxyacetone phosphate. The protein operates within carbohydrate degradation; glycolysis; D-glyceraldehyde 3-phosphate and glycerone phosphate from D-glucose: step 4/4. The chain is Fructose-bisphosphate aldolase C (Aldoc) from Rattus norvegicus (Rat).